Consider the following 343-residue polypeptide: Probable F-box protein At1g67455 (343 aa).

The region spanning 1-46 (MMISDLPEDMVEEILSRVSIISLGALRWNDLSKARVICKAEARQQF) is the F-box domain.

The sequence is that of Probable F-box protein At1g67455 from Arabidopsis thaliana (Mouse-ear cress).